We begin with the raw amino-acid sequence, 324 residues long: NADH-ubiquinone oxidoreductase chain 1 (324 aa).

8 consecutive transmembrane segments (helical) span residues 3-23 (LLFM…AVAF), 73-93 (LLFI…WTPF), 106-126 (ILFI…SGWA), 151-171 (ALII…AFAI), 175-195 (FTWF…STLA), 226-246 (LFFL…TIIF), 255-275 (TLTT…FLWV), and 295-315 (FLPL…SLLF).

Belongs to the complex I subunit 1 family.

Its subcellular location is the mitochondrion inner membrane. The catalysed reaction is a ubiquinone + NADH + 5 H(+)(in) = a ubiquinol + NAD(+) + 4 H(+)(out). In terms of biological role, core subunit of the mitochondrial membrane respiratory chain NADH dehydrogenase (Complex I) that is believed to belong to the minimal assembly required for catalysis. Complex I functions in the transfer of electrons from NADH to the respiratory chain. The immediate electron acceptor for the enzyme is believed to be ubiquinone. This chain is NADH-ubiquinone oxidoreductase chain 1 (MT-ND1), found in Aquarana catesbeiana (American bullfrog).